A 184-amino-acid polypeptide reads, in one-letter code: Der GTPase-activating protein YihI (184 aa).

The tract at residues 1–107 (MNRPVKGAAD…VVAAKPTMSP (107 aa)) is disordered. Residues 21–32 (TREELEREARER) show a composition bias toward basic and acidic residues. Positions 80–95 (SAVAKPKPKSKPSAPV) are enriched in low complexity.

Belongs to the YihI family. As to quaternary structure, interacts with Der.

A GTPase-activating protein (GAP) that modifies Der/EngA GTPase function. May play a role in ribosome biogenesis. This chain is Der GTPase-activating protein YihI, found in Pectobacterium carotovorum subsp. carotovorum (strain PC1).